Here is a 225-residue protein sequence, read N- to C-terminus: Probable molybdenum cofactor guanylyltransferase (225 aa).

GTP-binding positions include 20 to 22 (LAG), K33, D88, and D117. D117 contacts Mg(2+).

It belongs to the MobA family. Requires Mg(2+) as cofactor.

The protein resides in the cytoplasm. The catalysed reaction is Mo-molybdopterin + GTP + H(+) = Mo-molybdopterin guanine dinucleotide + diphosphate. Transfers a GMP moiety from GTP to Mo-molybdopterin (Mo-MPT) cofactor (Moco or molybdenum cofactor) to form Mo-molybdopterin guanine dinucleotide (Mo-MGD) cofactor. The polypeptide is Probable molybdenum cofactor guanylyltransferase (Methanosarcina acetivorans (strain ATCC 35395 / DSM 2834 / JCM 12185 / C2A)).